An 845-amino-acid polypeptide reads, in one-letter code: Protein SEY1 (845 aa).

The stretch at 1–29 (MELNVDSAKQLLAEHEQELQSAHDAHSIL) forms a coiled coil. The Cytoplasmic portion of the chain corresponds to 1 to 749 (MELNVDSAKQ…KRATVSSIAQ (749 aa)). Residues 112 to 334 (GFGYDLCAVL…DPNFVFKTEY (223 aa)) enclose the GB1/RHD3-type G domain. 122–129 (GSQSTGKS) is a binding site for GTP. The helical transmembrane segment at 750–770 (VPLWMYGVMLVLGWNELMAIL) threads the bilayer. Over 771 to 773 (SSP) the chain is Lumenal. The helical transmembrane segment at 774–794 (VYFAFLLVLIASAYIVWRLNL) threads the bilayer. The Cytoplasmic portion of the chain corresponds to 795 to 845 (SGPLISVLRAVANEVHRLADAQLRTHFSQPLREPRPPAESRPAEQIELEPN). The interval 823-845 (QPLREPRPPAESRPAEQIELEPN) is disordered. Positions 826–838 (REPRPPAESRPAE) are enriched in basic and acidic residues.

It belongs to the TRAFAC class dynamin-like GTPase superfamily. GB1/RHD3 GTPase family. RHD3 subfamily.

Its subcellular location is the endoplasmic reticulum membrane. Functionally, cooperates with the reticulon proteins and tubule-shaping DP1 family proteins to generate and maintain the structure of the tubular endoplasmic reticulum network. Has GTPase activity, which is required for its function in ER organization. This is Protein SEY1 from Mycosarcoma maydis (Corn smut fungus).